Here is a 393-residue protein sequence, read N- to C-terminus: S-adenosylmethionine synthase 1 (393 aa).

Glu9 lines the Mg(2+) pocket. An ATP-binding site is contributed by His15. Glu43 contributes to the K(+) binding site. L-methionine-binding residues include Glu56 and Gln99. ATP is bound by residues 167–169 (DGK), 235–238 (SGRF), Asp246, 252–253 (RK), Ala269, Lys273, and Lys277. Position 246 (Asp246) interacts with L-methionine. Lys277 is a binding site for L-methionine.

This sequence belongs to the AdoMet synthase family. Homotetramer. Requires Mn(2+) as cofactor. It depends on Mg(2+) as a cofactor. Co(2+) is required as a cofactor. The cofactor is K(+). In terms of tissue distribution, mostly expressed in stems.

The protein resides in the cytoplasm. The catalysed reaction is L-methionine + ATP + H2O = S-adenosyl-L-methionine + phosphate + diphosphate. Its pathway is amino-acid biosynthesis; S-adenosyl-L-methionine biosynthesis; S-adenosyl-L-methionine from L-methionine: step 1/1. Functionally, catalyzes the formation of S-adenosylmethionine from methionine and ATP. The reaction comprises two steps that are both catalyzed by the same enzyme: formation of S-adenosylmethionine (AdoMet) and triphosphate, and subsequent hydrolysis of the triphosphate. The chain is S-adenosylmethionine synthase 1 (SAM1) from Solanum lycopersicum (Tomato).